The sequence spans 143 residues: Ribosome-binding factor A (143 aa).

The tract at residues 117–143 is disordered; the sequence is DAEIARRSQGAMPAGEADPYRHSDEEE. Basic and acidic residues predominate over residues 134–143; that stretch reads DPYRHSDEEE.

It belongs to the RbfA family. As to quaternary structure, monomer. Binds 30S ribosomal subunits, but not 50S ribosomal subunits or 70S ribosomes.

The protein resides in the cytoplasm. Functionally, one of several proteins that assist in the late maturation steps of the functional core of the 30S ribosomal subunit. Associates with free 30S ribosomal subunits (but not with 30S subunits that are part of 70S ribosomes or polysomes). Required for efficient processing of 16S rRNA. May interact with the 5'-terminal helix region of 16S rRNA. The sequence is that of Ribosome-binding factor A from Cutibacterium acnes (strain DSM 16379 / KPA171202) (Propionibacterium acnes).